The following is a 278-amino-acid chain: Acyl-[acyl-carrier-protein]--UDP-N-acetylglucosamine O-acyltransferase (278 aa).

The protein belongs to the transferase hexapeptide repeat family. LpxA subfamily. Homotrimer.

The protein resides in the cytoplasm. It catalyses the reaction a (3R)-hydroxyacyl-[ACP] + UDP-N-acetyl-alpha-D-glucosamine = a UDP-3-O-[(3R)-3-hydroxyacyl]-N-acetyl-alpha-D-glucosamine + holo-[ACP]. Its pathway is glycolipid biosynthesis; lipid IV(A) biosynthesis; lipid IV(A) from (3R)-3-hydroxytetradecanoyl-[acyl-carrier-protein] and UDP-N-acetyl-alpha-D-glucosamine: step 1/6. Its function is as follows. Involved in the biosynthesis of lipid A, a phosphorylated glycolipid that anchors the lipopolysaccharide to the outer membrane of the cell. The protein is Acyl-[acyl-carrier-protein]--UDP-N-acetylglucosamine O-acyltransferase of Brucella anthropi (strain ATCC 49188 / DSM 6882 / CCUG 24695 / JCM 21032 / LMG 3331 / NBRC 15819 / NCTC 12168 / Alc 37) (Ochrobactrum anthropi).